The following is a 347-amino-acid chain: MEWRAVSRDKALDMLSTALNCRFDDEGLRISAVSECLRSVLYQYSISETEEARQTVTSLRLTSAVRRKLVPLWPDIADIDNAIHPGIMSILNSLAELGDMIKLEGGNWLTAPPHAVRIDNKMAVFFGGEPSCTFSTGVVAKSAGRVRLVEEKVCTGSVEIWDANEWIGAPAEGNEEWSSRLLSGTISGFIDAPSNMSETTAYVRGKWLHLSELSFNKKQIYLCRMSVDNHFSYYLGEIEAGRLCRMNSLESSDDVRRLRFFLDTKDNCPLKIRIKISNGLARLRLTRRLPRRETKVLLLGWRESGFENEHSGITHHVFPEEILPIVRSAFEGLGIIWINEFTRRNEI.

It is found in the cytoplasm. Functionally, component of antiviral defense system Druantia type I, composed of DruA, DruB, DruC, DruD and DruE. Expression of Druantia in E.coli (strain MG1655) confers resistance to phage lambda, SECphi18, SECphi27 and T4. The polypeptide is Druantia protein DruD (Escherichia coli (strain UMEA 4076-1)).